The following is a 163-amino-acid chain: Large ribosomal subunit protein uL11 (163 aa).

The tract at residues 1–25 (MAGTIEVLVAGGQADPGPPLGPELG) is disordered.

Belongs to the universal ribosomal protein uL11 family. In terms of assembly, part of the ribosomal stalk of the 50S ribosomal subunit. Interacts with L10 and the large rRNA to form the base of the stalk. L10 forms an elongated spine to which L12 dimers bind in a sequential fashion forming a multimeric L10(L12)X complex.

Forms part of the ribosomal stalk which helps the ribosome interact with GTP-bound translation factors. This chain is Large ribosomal subunit protein uL11, found in Natronomonas pharaonis (strain ATCC 35678 / DSM 2160 / CIP 103997 / JCM 8858 / NBRC 14720 / NCIMB 2260 / Gabara) (Halobacterium pharaonis).